The sequence spans 501 residues: Protein disulfide isomerase-like 1-1 (501 aa).

Positions 1 to 23 are cleaved as a signal peptide; the sequence is MAMRGFTLFSILVLSLCASSIRS. The Thioredoxin 1 domain maps to 24–141; that stretch reads EETETKEFVL…IVTYLKKQSG (118 aa). N-linked (GlcNAc...) asparagine glycosylation occurs at Asn39. Active-site nucleophile residues include Cys59 and Cys62. A disulfide bridge links Cys59 with Cys62. A glycan (N-linked (GlcNAc...) asparagine) is linked at Asn275. The Thioredoxin 2 domain occupies 354-482; it reads FKDGKIAPHK…FISFVDKNKD (129 aa). Active-site nucleophile residues include Cys404 and Cys407. Cys404 and Cys407 are oxidised to a cystine. A Prevents secretion from ER motif is present at residues 498–501; sequence KDEL.

This sequence belongs to the protein disulfide isomerase family. Interacts with RD21A, At3g19390, At5g43060. In terms of tissue distribution, highly expressed in flowers, stems and immature seeds, and at lower levels in leaves and siliques (at protein level).

Its subcellular location is the endoplasmic reticulum lumen. The protein resides in the vacuole. It catalyses the reaction Catalyzes the rearrangement of -S-S- bonds in proteins.. Protein disulfide isomerase that associates with RD21A protease for trafficking from the ER through the Golgi to lytic and protein storage vacuoles of endothelial cells in developing seeds. Regulates the timing of programmed cell death (PCD) of the endothelial cells by chaperoning and inhibiting cysteine proteases during their trafficking to vacuoles. The protein is Protein disulfide isomerase-like 1-1 (PDIL1-1) of Arabidopsis thaliana (Mouse-ear cress).